We begin with the raw amino-acid sequence, 175 residues long: Electron transport protein HydN (175 aa).

4Fe-4S ferredoxin-type domains lie at Asn-2 to Cys-32, Lys-48 to Lys-79, Gly-80 to Arg-109, and Asp-124 to Arg-157. Positions 12, 15, 18, 22, 58, 61, 66, 70, 89, 92, 95, 99, 131, 134, 143, and 147 each coordinate [4Fe-4S] cluster.

[4Fe-4S] cluster serves as cofactor.

Its function is as follows. Electron transport from formate to hydrogen. The polypeptide is Electron transport protein HydN (hydN) (Escherichia coli O157:H7).